Here is a 648-residue protein sequence, read N- to C-terminus: Macrolide export ATP-binding/permease protein MacB (648 aa).

In terms of domain architecture, ABC transporter spans 5–243; the sequence is LELCNVSRSY…QGVDAAVVNT (239 aa). 41–48 is an ATP binding site; the sequence is GVSGSGKS. The next 5 helical transmembrane spans lie at 273–293, 417–437, 523–543, 577–597, and 611–631; these read LLTMLGIIIGIASVVSIVVVG, ANVVGEVVLVGNMPVIVIGVA, LFLTLVAVISLVVGGIGVMNI, VLVCLVGGALGISLSMFIAFM, and LTALASAFLCSTFTGILFGWL.

It belongs to the ABC transporter superfamily. Macrolide exporter (TC 3.A.1.122) family. Homodimer. Part of the tripartite efflux system MacAB-TolC, which is composed of an inner membrane transporter, MacB, a periplasmic membrane fusion protein, MacA, and an outer membrane component, TolC. The complex forms a large protein conduit and can translocate molecules across both the inner and outer membranes. Interacts with MacA.

The protein localises to the cell inner membrane. Part of the tripartite efflux system MacAB-TolC. MacB is a non-canonical ABC transporter that contains transmembrane domains (TMD), which form a pore in the inner membrane, and an ATP-binding domain (NBD), which is responsible for energy generation. Confers resistance against macrolides. This is Macrolide export ATP-binding/permease protein MacB from Salmonella typhi.